The chain runs to 388 residues: Putative C-&gt;U-editing enzyme APOBEC-4 (388 aa).

Residues 60-176 (PQTKHLTFYE…AWNREALRGL (117 aa)) form the CMP/dCMP-type deaminase domain. Histidine 92 contributes to the Zn(2+) binding site. The active-site Proton donor is glutamate 94. Positions 126 and 133 each coordinate Zn(2+). Residues 322–356 (KVKALRKSPSGRPVKKEEARKGSTRSQEANETNKS) form a disordered region.

Belongs to the cytidine and deoxycytidylate deaminase family. Zn(2+) is required as a cofactor.

Putative C to U editing enzyme whose physiological substrate is not yet known. This Rattus norvegicus (Rat) protein is Putative C-&gt;U-editing enzyme APOBEC-4 (Apobec4).